Reading from the N-terminus, the 189-residue chain is Adenylate kinase (189 aa).

10-15 (GAGKGT) is a binding site for ATP. The tract at residues 30–59 (STGDIFRANVSGGTELGKKAQAYMDRGDLV) is NMP. Residues threonine 31, arginine 36, 57–59 (DLV), 85–88 (GFPR), and glutamine 92 each bind AMP. An LID region spans residues 126 to 136 (ERARIDNRSDD). Arginine 127 contacts ATP. Positions 133 and 144 each coordinate AMP. Residue glycine 172 participates in ATP binding.

The protein belongs to the adenylate kinase family. In terms of assembly, monomer.

It localises to the cytoplasm. The enzyme catalyses AMP + ATP = 2 ADP. It functions in the pathway purine metabolism; AMP biosynthesis via salvage pathway; AMP from ADP: step 1/1. In terms of biological role, catalyzes the reversible transfer of the terminal phosphate group between ATP and AMP. Plays an important role in cellular energy homeostasis and in adenine nucleotide metabolism. This Thermobifida fusca (strain YX) protein is Adenylate kinase.